The sequence spans 563 residues: Forkhead box protein O (563 aa).

Disordered stretches follow at residues 1-72 and 177-243; these read MDDF…DPQQ and KSVR…SYQL. The residue at position 43 (threonine 43) is a Phosphothreonine; by PKB/AKT1. The segment covering 58–72 has biased composition (polar residues); the sequence is TKASNQQLANGDPQQ. Residues 90–196 constitute a DNA-binding region (fork-head); sequence WGNLSYADLI…ETSRYEKRRG (107 aa). Phosphoserine; by PKB/AKT1 is present on serine 185. Polar residues predominate over residues 216–225; the sequence is ATPSPSSSVS. Serine 253 carries the phosphoserine; by PKB/AKT1 modification. Residues serine 256, serine 257, and serine 262 each carry the phosphoserine modification. The interval 317–371 is disordered; the sequence is AASGLPTQPPPPYQPPQHPQHTQGYALNGPGLSPNSVTTTMSPAYPNSEPSSDSL. Over residues 323–334 the composition is skewed to pro residues; the sequence is TQPPPPYQPPQH. A compositionally biased stretch (polar residues) spans 349-358; it reads SPNSVTTTMS.

In terms of assembly, interacts with melt.

The protein resides in the cytoplasm. Its subcellular location is the nucleus. Transcription factor involved in the regulation of the insulin signaling pathway. Consistently activates both the downstream target Thor\d4EBP and the feedback control target InR. Involved in negative regulation of the cell cycle, modulating cell growth and proliferation. In response to cellular stresses, such as nutrient deprivation or increased levels of reactive oxygen species, foxo is activated and inhibits growth through the action of target genes such as Thor. Foxo activated in the adult fat body can regulate lifespan in adults; an insulin peptide itself may function as one secondary messenger of insulin-regulated aging. Also regulates Lip4, homolog of human acid lipases, thereby acting as a key modulator of lipid metabolism by insulin signaling and integrates insulin responses to glucose and lipid homeostasis. This is Forkhead box protein O from Drosophila mojavensis (Fruit fly).